Consider the following 364-residue polypeptide: DNA polymerase IV (364 aa).

One can recognise a UmuC domain in the interval 14 to 198; the sequence is IIHIDMDAFF…LPIEKFHGVG (185 aa). Mg(2+) contacts are provided by aspartate 18 and aspartate 116. Glutamate 117 is an active-site residue.

The protein belongs to the DNA polymerase type-Y family. As to quaternary structure, monomer. Mg(2+) is required as a cofactor.

It localises to the cytoplasm. The enzyme catalyses DNA(n) + a 2'-deoxyribonucleoside 5'-triphosphate = DNA(n+1) + diphosphate. In terms of biological role, poorly processive, error-prone DNA polymerase involved in untargeted mutagenesis. Copies undamaged DNA at stalled replication forks, which arise in vivo from mismatched or misaligned primer ends. These misaligned primers can be extended by PolIV. Exhibits no 3'-5' exonuclease (proofreading) activity. May be involved in translesional synthesis, in conjunction with the beta clamp from PolIII. This chain is DNA polymerase IV, found in Streptococcus pyogenes serotype M28 (strain MGAS6180).